Here is a 2113-residue protein sequence, read N- to C-terminus: MSVFRLGDHVWLDPPSSSKTGVAIGGIVKETKLGKTLIEDDEGKEHWVHAEDLSTLRPMHPNSAQGVDDMIRLGDLNEAGVVHNLLIRYQQHKIYTYTGSILVAVNPFQMLPLYTLEQVQIYYSRHMGELPPHIFAIANSCYFNMKKNKRDQCCIISGESGAGKTETTKLILQFLATVSGQHSWIEQQVLEANPILEAFGNAKTIRNDNSSRFGKYIDIHFNSSGVIEGASIEHFLLEKSRVCRQAPEERNYHIFYCMLMGMSPEEKQMLSLGMPSEYHYLTMGSCTSSEGLSDAKDYAHVRSAMKILQFSDSENWDISKLLAAILHLGNVGFMAAVFENLDSSDVMETPAFPLAMKLLEVQHQALRDCLIKHTIPVLGEFVSRPVNIAQATDRRDAFVKGIYGRLFQWIVKKINAAIFTPQAQDPQNVRRAIGLLDIFGFENFQNNSFEQLCINFANEHLQQFFVKHVFTMEQEEYLSENITWNYIHYTDNQPILDMLALKPMSIISLLDEESRFPQGTDVTMLQKLNSIHANNKSFLSPRSIHDTRFGIAHFAGDVYYQAEGFLEKNRDVLSTDILILIHSSKNKFLKEIFNVDSSQTKLGHGTICQVKAGSQLFKSSDSIKRPVTLASQFKQSLDQLMRILTNCQPYFVRCIKPNEYKKPLLFDRELCIQQLRYSGMMETVHIRKSGFPIRYTFDEFSQRFRVLLPSPERMQFQNKPRQMTLHIADLCLGTDKDWKVGKTKIFLKDHQDTVLEIRRSQALDGAAIRIQRVLRGHKYRKEFLRQRRAAVTLQAGWRGYSQRKNFKLILVGFERLQAIARSHLLMRQFQAMRQRIVQLQARCRGYLVRQQVQAKRRAVVIIQAHARGMVVRKSYWQQKSTGPQVILAKEPKAQVAVHERKRKSIYDTVTDTAMVEKVFGFLPAMIGGQEGPAPTRFEDLEVKTQKLHEVDLDTVPMMAMPEEEVDSLAEYTFPKFAVTYFQKSASHTHIQKPLRYPLLYHENDTDHSAALDVWIIILRFMGDLPEPVVYGRNSLTGSSVMRQIHDKLGKDSVTQHNRSSQVASQLNFGEEAFKFDGPISDRPMSNLEKVHFIVGYAIMRPGLRDEIYCQICKQLSENYKTSSRARGWILLSLCLGCFPPSERFMKYLLNFISQGPPSYGPFCAERLQRTFANGVRAEPPTWLELQAVKSKKHIPIQVILATGRSLTISVDSASTSREICQHVAQKQGLRDNLGFSLQVAVYDKFWSLGSGCDHLMDAVAQCEQLARERGESQRQAPWRIYFRKEFFTPWHDSQEDPVSTELIYHQVLRGVWSGEYNFEKEEELVELLARHCYVQLGATVKSNAVQELLPSCVPSKLYRTKSPEKWASLVTAAHAKAQYTQSKATPLAVREQTVEAARLLWPLLFSRLFEVTTLSGPRLPKTQLVLAINWKGMYFLDQKERTLLGLSFAEVMGLVANRDAPGGKKLLLATLQEEYEFVSPSSVAIAEMVALFLGGLKERSVFAMALQDRRATDDITLLPFKKGDLLILTKKQGLLASENWALGQNDRTGKTGLVPTACLYTIPSVTKPSTQLLSLLAMSPEKRKLAAQEVRALEPPLEDQLTESPYTLEEFSYQFFRAPEKETISRAAMPMARSRGHLWAYSPEPLRQPLLKSVHDKAKLRDAACQIFLAILKYTGDYPSRQSWHSLELTDQMFSLALQDPALQDELYCQILKQLTHNSIRFSEERAWQLLWLCTGLFPPGKTLLPHAQKFIDSRKKKPLALDCSRRLHRVLRVGPRKQPPHDVEVKAAEQNVSKLHHEVYLPNDTSKSMEVGSSSRVRDLCEGIGTRLQLASWDGCSLFIKITDKVISLKEGDFFFDSLRQVSDWVKKNRPQKEGASVTLPYQVFFMRKLWLNVTPGKDVNADTILHYHQELPKYLRGFHKCSREDAIHLGGLICKIQFGSDSSQLASVSKVLKELVPQNLTRLMSSEEWKKSLLLECDKNKRKTVAEAKVEFLKYMYRWPTFGSAFFEVKQTSEPSYPDILLIAINRHGLLLIHPKTKELLNTYPFTKISSWSSGNTYFHMALGSLGQGSRLLCETSLGYKMDDLLTSYVQQLLNTVNKQRGFRAPAPANP.

The 696-residue stretch at 65 to 760 (QGVDDMIRLG…QDTVLEIRRS (696 aa)) folds into the Myosin motor domain. ATP is bound at residue 158-165 (GESGAGKT). The actin-binding stretch occupies residues 637–659 (LDQLMRILTNCQPYFVRCIKPNE). IQ domains lie at 745–765 (IFLK…ALDG), 763–792 (LDGA…AAVT), 786–815 (QRRA…GFER), 809–838 (ILVG…RIVQ), 832–861 (MRQR…AVVI), and 855–884 (KRRA…TGPQ). Ser904 is modified (phosphoserine). A mediates interaction with ANKS4B region spans residues 962–1578 (EEEVDSLAEY…STQLLSLLAM (617 aa)). In terms of domain architecture, MyTH4 1 spans 989–1189 (HIQKPLRYPL…PTWLELQAVK (201 aa)). Residues 1194–1503 (IPIQVILATG…GGLKERSVFA (310 aa)) enclose the FERM 1 domain. Thr1339 carries the post-translational modification Phosphothreonine. The residue at position 1368 (Ser1368) is a Phosphoserine. The interval 1497–2113 (KERSVFAMAL…GFRAPAPANP (617 aa)) is mediates interaction with CDHR2, CDHR5 and USH1C. The 67-residue stretch at 1498-1564 (ERSVFAMALQ…PTACLYTIPS (67 aa)) folds into the SH3 domain. MyTH4 domains are found at residues 1641 to 1790 (YSPE…KAAE) and 1790 to 1896 (EQNV…LNVT). A Phosphoserine modification is found at Ser1642. Residues 1796-2099 (LHHEVYLPND…SYVQQLLNTV (304 aa)) enclose the FERM 2 domain.

This sequence belongs to the TRAFAC class myosin-kinesin ATPase superfamily. Myosin family. Part of the IMAC/intermicrovillar adhesion complex/intermicrovillar tip-link complex composed of ANKS4B, MYO7B, USH1C, CDHR2 and CDHR5. Interacts with CDHR2. Interacts with CDHR5. Interacts with USH1C. Interacts with ANKS4B; requires initial interaction with USH1C. Interacts with CALML4; the interaction mediates the association of CALML4 with the IMAC/intermicrovillar adhesion complex. As to expression, expressed primarily in kidney and intestine. Detected in proximal tubule cells of the kidney and enterocytes of the intestine, specifically the distal tips of apical microvilli on these transporting epithelial cells (at protein level).

The protein localises to the cytoplasm. It is found in the cytoskeleton. It localises to the cell projection. Its subcellular location is the microvillus. Myosins are actin-based motor molecules with ATPase activity. Their highly divergent tails are presumed to bind to membranous compartments, which would be moved relative to actin filaments. As part of the intermicrovillar adhesion complex/IMAC plays a role in epithelial brush border differentiation, controlling microvilli organization and length. May link the complex to the actin core bundle of microvilli. This Mus musculus (Mouse) protein is Unconventional myosin-VIIb (Myo7b).